Here is a 428-residue protein sequence, read N- to C-terminus: Trigger factor (428 aa).

The 86-residue stretch at 163 to 248 (GDTVVIDFEG…VHEVKAKQLP (86 aa)) folds into the PPIase FKBP-type domain.

It belongs to the FKBP-type PPIase family. Tig subfamily.

The protein resides in the cytoplasm. The enzyme catalyses [protein]-peptidylproline (omega=180) = [protein]-peptidylproline (omega=0). Involved in protein export. Acts as a chaperone by maintaining the newly synthesized protein in an open conformation. Functions as a peptidyl-prolyl cis-trans isomerase. This chain is Trigger factor, found in Geobacillus kaustophilus (strain HTA426).